Here is a 159-residue protein sequence, read N- to C-terminus: Transcription repressor OFP6 (159 aa).

Residues 39 to 60 (PKRPSSTYRHCHSSISSATPSS) are disordered. Residues 51–60 (SSISSATPSS) are compositionally biased toward low complexity. Residues 70 to 129 (VEKDSDDPYLDFRQSMLQMILENQIYSKDELRELLQCFLSLNSHYHHGIIVRAFSEIWED) enclose the OVATE domain.

In terms of assembly, interacts with KNAT1 and KNAT7. In terms of tissue distribution, expressed in roots, shoots, rosette and cauline leaves, stems, flower buds and siliques.

Its subcellular location is the nucleus. Its function is as follows. Transcriptional repressor that regulates multiple aspects of plant growth and development through the regulation of BEL1-LIKE (BLH) and KNOX TALE (KNAT) homeodomain transcription factors. In Arabidopsis thaliana (Mouse-ear cress), this protein is Transcription repressor OFP6 (OFP6).